The chain runs to 476 residues: MSNTSDLSPVHVVGGGLAGSEAAWQLAQAGVPVILHEMRPVRGTDAHKTEQLAELVCSNSFRSDDAETNAVGVLHAEMRLAGSLIMACADAHQVPAGGALAVDREGFSQAVTAKLEAHPLITIVREEVTGLPPEEWGTTIVATGPLTAPSLAEAIQAQTGADALAFFDAIAPIIHFDSINMDVCWFQSRYDKVGPGGTGKDYINCPMDKEQYEAFVAALVEGDKTDFKEWEGTPYFDGCLPIEVMAERGPETLRHGPMKPMGLTNAHNPTVKAYAVVQLRQDNALGTLYNMVGFQTKLKYGSQTGIFKMIPGLENAEFARLGGLHRNTYLNSPVLLDGTLRLKSRETLRFAGQVTGCEGYVESSAIGLLAGRFTAAEKLGQTLTPPPGTTAFGALLGHITGGHIVADDEPGKRSFQPMNVNFGLFPPVDVPKPEGKRLRGKEKTVAKKRALSARALADCRQWLGLLGLGSGLEPAE.

14 to 19 (GGGLAG) is a binding site for FAD.

The protein belongs to the MnmG family. TrmFO subfamily. FAD serves as cofactor.

It is found in the cytoplasm. It catalyses the reaction uridine(54) in tRNA + (6R)-5,10-methylene-5,6,7,8-tetrahydrofolate + NADH + H(+) = 5-methyluridine(54) in tRNA + (6S)-5,6,7,8-tetrahydrofolate + NAD(+). The enzyme catalyses uridine(54) in tRNA + (6R)-5,10-methylene-5,6,7,8-tetrahydrofolate + NADPH + H(+) = 5-methyluridine(54) in tRNA + (6S)-5,6,7,8-tetrahydrofolate + NADP(+). Catalyzes the folate-dependent formation of 5-methyl-uridine at position 54 (M-5-U54) in all tRNAs. The protein is Methylenetetrahydrofolate--tRNA-(uracil-5-)-methyltransferase TrmFO of Brucella anthropi (strain ATCC 49188 / DSM 6882 / CCUG 24695 / JCM 21032 / LMG 3331 / NBRC 15819 / NCTC 12168 / Alc 37) (Ochrobactrum anthropi).